Consider the following 477-residue polypeptide: MTSKFLLVSFILAALSLSTTFSLQPDQQKVLLVSFDGFRWDYLYKVPTPHFHYIMKYGVHVKQVTNVFITKTYPNHYTLVTGLFAENHGIVANDMFDPIRNKSFSLDHMNIYDSKFWEEATPIWITNQRAGHTSGAAMWPGTDVKIHKRFPTHYMPYNESVSFEDRVAKIIEWFTSKEPINLGLLYWEDPDDMGHHLGPDSPLMGPVISDIDKKLGYLIQMLKKAKLWNTLNLIITSDHGMTQCSEERLIELDQYLDKDHYTLIDQSPVAAILPKEGKFDEVYEALTHAHPNLTVYKKEDVPERWHYKYNSRIQPIIAVADEGWHILQNKSDDFLLGNHGYDNALADMHPIFLAHGPAFRKNFSKEAMNSTDLYPLLCHLLNITAMPHNGSFWNVQDLLNSAMPRVVPYTQSTILLPGSVKPAEYDQEGSYPYFIGVSLGSIIVIVFFVIFIKHLIHSQIPALQDMHAEIAQPLLQA.

The first 24 residues, 1–24 (MTSKFLLVSFILAALSLSTTFSLQ), serve as a signal peptide directing secretion. Zn(2+) is bound by residues aspartate 36 and threonine 72. Threonine 72 functions as the Nucleophile in the catalytic mechanism. 2 N-linked (GlcNAc...) asparagine glycosylation sites follow: asparagine 101 and asparagine 158. Residues aspartate 191, histidine 195, aspartate 238, and histidine 239 each contribute to the Zn(2+) site. N-linked (GlcNAc...) asparagine glycosylation is found at asparagine 292 and asparagine 329. Histidine 339 contacts Zn(2+). Residues asparagine 362, asparagine 369, asparagine 382, and asparagine 389 are each glycosylated (N-linked (GlcNAc...) asparagine). The chain crosses the membrane as a helical span at residues 432-452 (PYFIGVSLGSIIVIVFFVIFI).

Belongs to the nucleotide pyrophosphatase/phosphodiesterase family. Requires Zn(2+) as cofactor. N-glycosylated.

Its subcellular location is the secreted. The protein localises to the membrane. In terms of biological role, can hydrolyze NAD but cannot hydrolyze nucleotide di- and triphosphates. Lacks lysopholipase D activity. May play a role in neuronal cell communication. The chain is Ectonucleotide pyrophosphatase/phosphodiesterase family member 5 from Homo sapiens (Human).